The primary structure comprises 309 residues: uncharacterized protein (309 aa).

This is an uncharacterized protein from Aquifex aeolicus (strain VF5).